The primary structure comprises 252 residues: MIGIIGGTGIAEILKGDKEEIINTKYGKARVIIDKENEVVLLFRHGVRHNIPPHKINYRANIYALKKLGVERILAINSVGSLKEDLKPGMFFVPNDFIEFTKKREETFYDEGKVVHIDMTDPYCPELRNILKSILDKNNFSYGEGVYVCTEGPRFETKKEIAIYKNWGDVVGMTGYPEVVLARELEMCYVSLCNITNYACGISKNILTVDEVLEKIKEMENKILKVVEDFINYGFGERKCICKDALKHAVIG.

Residues threonine 8 and 44-45 (RH) contribute to the phosphate site. Residue methionine 173 participates in substrate binding. Threonine 174 lines the phosphate pocket. 197 to 199 (NYA) serves as a coordination point for substrate.

The protein belongs to the PNP/MTAP phosphorylase family. MTAP subfamily. Homotrimer.

The enzyme catalyses S-methyl-5'-thioinosine + phosphate = 5-(methylsulfanyl)-alpha-D-ribose 1-phosphate + hypoxanthine. Its pathway is purine metabolism; purine nucleoside salvage. Functionally, catalyzes the reversible phosphorylation of S-methyl-5'-thioinosine (MTI) to hypoxanthine and 5-methylthioribose-1-phosphate. Involved in the breakdown of S-methyl-5'-thioadenosine (MTA), a major by-product of polyamine biosynthesis. Catabolism of (MTA) occurs via deamination to MTI and phosphorolysis to hypoxanthine. This chain is Probable S-methyl-5'-thioinosine phosphorylase, found in Methanocaldococcus jannaschii (strain ATCC 43067 / DSM 2661 / JAL-1 / JCM 10045 / NBRC 100440) (Methanococcus jannaschii).